Reading from the N-terminus, the 439-residue chain is FAD-linked oxidoreductase phmC (439 aa).

The first 19 residues, 1-19 (MLSSILLTIFCAFLSSTGA), serve as a signal peptide directing secretion. N29 and N84 each carry an N-linked (GlcNAc...) asparagine glycan. The FAD-binding PCMH-type domain maps to 89–272 (QGSVPSYYIQ…LSTTTRVEPK (184 aa)). N-linked (GlcNAc...) asparagine glycosylation is found at N285 and N300.

This sequence belongs to the oxygen-dependent FAD-linked oxidoreductase family. FAD is required as a cofactor.

It functions in the pathway mycotoxin biosynthesis. FAD-linked oxidoreductase; part of the gene cluster that mediates the biosynthesis of the mycotoxins phomacins, leucine-derived cytochalasans with potent actin polymerization-inhibitory activities and monocot-specific antigerminative activities. The first step in the pathway is catalyzed by the hybrid PKS-NRPS phmA, assisted by the enoyl reductase phmE, that are responsible for fusion of the leucine precursor and the polyketide backbone to produce a 2-pyrrolidone intermediate. The polyketide synthase module (PKS) of phmA is responsible for the synthesis of the polyketide backbone and the downstream nonribosomal peptide synthetase (NRPS) amidates the carboxyl end of the polyketide with the leucine precursor. Because phmA lacks a designated enoylreductase (ER) domain, the required activity is provided the enoyl reductase phmE. Reduction by the hydrolyase phmG, followed by dehydration and intra-molecular Diels-Alder cyclization by the Diels-Alderase phmD then yield the required isoindolone-fused macrocycle. A number of oxidative steps catalyzed by the tailoring cytochrome P450 monooxygenase phmB, the FAD-linked oxidoreductase phmC and the short-chain dehydrogenase/reductase phmF, are further required to afford the final products, phomacin D and phomacin E. The protein is FAD-linked oxidoreductase phmC of Phaeosphaeria nodorum (strain SN15 / ATCC MYA-4574 / FGSC 10173) (Glume blotch fungus).